A 254-amino-acid polypeptide reads, in one-letter code: RNA polymerase sigma factor SigI8 (254 aa).

Positions 61-74 match the Polymerase core binding motif; that stretch reads DEYSIALIAFNEAI. The segment at residues 209–228 is a DNA-binding region (H-T-H motif); the sequence is YKELTERFNLCRRTLEKNRK.

Belongs to the sigma-70 factor family. SigI subfamily. Interacts with RsgI8.

It is found in the cytoplasm. With respect to regulation, negatively regulated by the anti-sigma-I factor RsgI8. Functionally, sigma factors are initiation factors that promote the attachment of RNA polymerase to specific initiation sites and are then released. The chain is RNA polymerase sigma factor SigI8 from Acetivibrio thermocellus (strain ATCC 27405 / DSM 1237 / JCM 9322 / NBRC 103400 / NCIMB 10682 / NRRL B-4536 / VPI 7372) (Clostridium thermocellum).